A 337-amino-acid polypeptide reads, in one-letter code: Basic membrane protein A2 (337 aa).

The signal sequence occupies residues 1–17; sequence MNKLLLLILFECIIFLS. C18 carries N-palmitoyl cysteine lipidation. C18 is lipidated: S-diacylglycerol cysteine.

Belongs to the BMP lipoprotein family. Monomer.

It localises to the cell inner membrane. Immunogenic protein. May be part of an ABC-type nucleoside uptake system involved in the purine salvage pathway. In Borrelia garinii subsp. bavariensis (strain ATCC BAA-2496 / DSM 23469 / PBi) (Borreliella bavariensis), this protein is Basic membrane protein A2 (bmpA2).